A 307-amino-acid polypeptide reads, in one-letter code: MISVKVPASSANLGAGFDCMGVALKLYNIIEVEEIEKGLIITSSPDDPSIAKDENNLVFRAMKTVFDEVGWYPRGLRINLINEIPLTRGLGSSAACISGGIYAANLLCGGKLSEEEMIYLAAKMEGHPDNSTPAMIGGLVFAVLEDKKVNYIKFVVPARLKFAVFIPDFQLSTEYARNILPKYIEFKDAVFNIGRATLFASAITTGNYELLPAATQDRLHQPYRKKLIPDFDKIVNLSLEAGAKGAFLSGAGPSIIALVDENYEIFEQNVKNALASMDLVANWDFMILEADNSGATVFSVQSTSLKR.

An ATP-binding site is contributed by 85 to 95 (PLTRGLGSSAA).

It belongs to the GHMP kinase family. Homoserine kinase subfamily.

It is found in the cytoplasm. The enzyme catalyses L-homoserine + ATP = O-phospho-L-homoserine + ADP + H(+). The protein operates within amino-acid biosynthesis; L-threonine biosynthesis; L-threonine from L-aspartate: step 4/5. In terms of biological role, catalyzes the ATP-dependent phosphorylation of L-homoserine to L-homoserine phosphate. The chain is Homoserine kinase from Caldicellulosiruptor bescii (strain ATCC BAA-1888 / DSM 6725 / KCTC 15123 / Z-1320) (Anaerocellum thermophilum).